Consider the following 275-residue polypeptide: Light-independent protochlorophyllide reductase iron-sulfur ATP-binding protein (275 aa).

ATP-binding positions include 12-17 (GIGKST) and Lys41. Ser16 is a binding site for Mg(2+). Residues Cys97 and Cys131 each coordinate [4Fe-4S] cluster. Position 182 to 183 (182 to 183 (NR)) interacts with ATP.

It belongs to the NifH/BchL/ChlL family. In terms of assembly, homodimer. Protochlorophyllide reductase is composed of three subunits; BchL, BchN and BchB. [4Fe-4S] cluster is required as a cofactor.

It carries out the reaction chlorophyllide a + oxidized 2[4Fe-4S]-[ferredoxin] + 2 ADP + 2 phosphate = protochlorophyllide a + reduced 2[4Fe-4S]-[ferredoxin] + 2 ATP + 2 H2O. The protein operates within porphyrin-containing compound metabolism; bacteriochlorophyll biosynthesis (light-independent). In terms of biological role, component of the dark-operative protochlorophyllide reductase (DPOR) that uses Mg-ATP and reduced ferredoxin to reduce ring D of protochlorophyllide (Pchlide) to form chlorophyllide a (Chlide). This reaction is light-independent. The L component serves as a unique electron donor to the NB-component of the complex, and binds Mg-ATP. The chain is Light-independent protochlorophyllide reductase iron-sulfur ATP-binding protein from Chlorobium phaeovibrioides (strain DSM 265 / 1930) (Prosthecochloris vibrioformis (strain DSM 265)).